The chain runs to 1233 residues: Structural maintenance of chromosomes protein 1A (1233 aa).

32–39 (GPNGSGKS) serves as a coordination point for ATP. Coiled-coil stretches lie at residues 104-124 (EYKINNKVVQLHEYSEELEKL) and 163-503 (ELAQ…KAEI). A compositionally biased stretch (basic and acidic residues) spans 284–293 (IKEKDSELNQ). Disordered regions lie at residues 284 to 308 (IKEKDSELNQKRPQYIKAKENTSHK) and 348 to 369 (QEFEERMEEESQSQGRDLTLEE). 2 positions are modified to phosphoserine: serine 358 and serine 360. An SMC hinge domain is found at 515-629 (VYGRLIDLCQ…DNVEDARRIA (115 aa)). N6-acetyllysine occurs at positions 648 and 713. Residues 660 to 935 (KAKARRWDEK…RHNLLQACKM (276 aa)) are a coiled coil. The disordered stretch occupies residues 947–966 (MDDISQEEGSSQGEDSVSGS). Over residues 953-966 (EEGSSQGEDSVSGS) the composition is skewed to low complexity. The residue at position 957 (serine 957) is a Phosphoserine; by ATM. Serine 962 is modified (phosphoserine). The residue at position 966 (serine 966) is a Phosphoserine; by ATM and ATR. Phosphoserine is present on serine 970. The stretch at 991–1068 (KDAQAEEEIK…FEQIKKERFD (78 aa)) forms a coiled coil. Lysine 1037 carries the post-translational modification N6-acetyllysine.

This sequence belongs to the SMC family. SMC1 subfamily. As to quaternary structure, forms a heterodimer with SMC3 in cohesin complexes. Cohesin complexes are composed of the SMC1 (SMC1A or SMC1B) and SMC3 heterodimer attached via their SMC hinge domain, RAD21 which link them, and one STAG protein (STAG1, STAG2 or STAG3), which interacts with RAD21. In germ cell cohesin complexes, SMC1A is mutually exclusive with SMC1B. Interacts with BRCA1. Found in a complex with CDCA5, SMC3 and RAD21, PDS5A/SCC-112 and PDS5B/APRIN. Interacts with NDC80. Interacts with BRAT1. Found in a complex containing POLE and SMC3. Interacts with RPGR, STAG3 and SYCP2. The cohesin complex interacts with the cohesin loading complex subunits NIPBL/Scc2 (via HEAT repeats) and MAU2/Scc4. NIPBL directly contacts all members of the complex, RAD21, SMC1A/B, SMC3 and STAG1. In terms of processing, ubiquitinated by the DCX(DCAF15) complex, leading to its degradation. Post-translationally, phosphorylated by ATM upon ionizing radiation in a NBS1-dependent manner. Phosphorylated by ATR upon DNA methylation in a MSH2/MSH6-dependent manner. Phosphorylation of Ser-957 and Ser-966 activates it and is required for S-phase checkpoint activation.

The protein resides in the nucleus. The protein localises to the chromosome. Its subcellular location is the centromere. It is found in the kinetochore. Its function is as follows. Involved in chromosome cohesion during cell cycle and in DNA repair. Central component of cohesin complex. The cohesin complex is required for the cohesion of sister chromatids after DNA replication. The cohesin complex apparently forms a large proteinaceous ring within which sister chromatids can be trapped. At anaphase, the complex is cleaved and dissociates from chromatin, allowing sister chromatids to segregate. The cohesin complex may also play a role in spindle pole assembly during mitosis. Involved in DNA repair via its interaction with BRCA1 and its related phosphorylation by ATM, or via its phosphorylation by ATR. Works as a downstream effector both in the ATM/NBS1 branch and in the ATR/MSH2 branch of S-phase checkpoint. This chain is Structural maintenance of chromosomes protein 1A (SMC1A), found in Homo sapiens (Human).